The sequence spans 498 residues: Cytochrome P450 monooxygenase apdB (498 aa).

The chain crosses the membrane as a helical span at residues 20-40 (ASPQVFKLFVLILFVLLVLKI). Cys457 lines the heme pocket.

The protein belongs to the cytochrome P450 family. Heme is required as a cofactor.

The protein resides in the membrane. It participates in secondary metabolite biosynthesis. Cytochrome P450 monooxygenase; part of the gene cluster that mediates the biosynthesis of aspyridones. The polyketide-amino acid backbone preaspyridone A is first assembled by the PKS-NRPS hybrid apdA. The assembly of preaspyridone A is initiated by loading of malonyl-CoA onto apdA, followed by decarboxylation to yield the acetyl starter unit. The growing polyketide chain then elongates into a tetraketide. The adpA PKS module catalyzes three Claisen condensations, as well as beta-keto processing and methylation. Alpha-methylation step during polyketide synthesis is a prerequisite and a key checkpoint for chain transfer between PKS and NRPS modules. The downstream NRPS module contains the condensation (C), adenylation (A), and thiolation (T) domains and catalyzes the incorporation of tyrosine via the formation of the L-tyrosinyl-thioester and the amide linkage between L-tyrosinyl-thioester and the tetraketide. The bimodular assembly line is terminated with a reductase (R) domain that facilitates formation and release of the tetramic acid product. Because apdA lacks a designated enoylreductase (ER) domain, the required activity is provided the enoyl reductase apdC. ApdC appears to operate with different stereoselectivity in different PKS cycle. Combined with apdC, apdA is proposed to synthesize preaspyridone A via about 20 enzymatic steps. A number of oxidative steps performed successively by the cytochrome P450 monooxygenases apdE and apdB are required for the conversion of preaspyridone A to aspyridone A. The cytochrome P450 monooxygenase apdE is responsible for the oxidative dephenylation of preaspyridone A. Finally, the predicted FAD-dependent monooxygenase apdD and the acyl-CoA dehydrogenase apdG may be involved in the transformation of aspyridone A into aspyridone B. In Emericella nidulans (strain FGSC A4 / ATCC 38163 / CBS 112.46 / NRRL 194 / M139) (Aspergillus nidulans), this protein is Cytochrome P450 monooxygenase apdB.